Consider the following 189-residue polypeptide: Inosine triphosphate pyrophosphatase (189 aa).

Residue threonine 8 to lysine 13 coordinates ITP. A Mg(2+)-binding site is contributed by glutamate 39. ITP is bound by residues lysine 51, aspartate 67–threonine 68, lysine 84, phenylalanine 143–aspartate 146, lysine 167, and histidine 172–arginine 173.

It belongs to the HAM1 NTPase family. As to quaternary structure, homodimer. It depends on Mg(2+) as a cofactor. Mn(2+) is required as a cofactor.

Its subcellular location is the cytoplasm. It localises to the nucleus. It carries out the reaction ITP + H2O = IMP + diphosphate + H(+). The enzyme catalyses dITP + H2O = dIMP + diphosphate + H(+). The catalysed reaction is XTP + H2O = XMP + diphosphate + H(+). Pyrophosphatase that hydrolyzes non-canonical purine nucleotides such as inosine triphosphate (ITP), deoxyinosine triphosphate (dITP) or xanthosine 5'-triphosphate (XTP) to their respective monophosphate derivatives. The enzyme does not distinguish between the deoxy- and ribose forms. Probably excludes non-canonical purines from RNA and DNA precursor pools, thus preventing their incorporation into RNA and DNA and avoiding chromosomal lesions. The chain is Inosine triphosphate pyrophosphatase from Cryptococcus neoformans var. neoformans serotype D (strain JEC21 / ATCC MYA-565) (Filobasidiella neoformans).